Here is a 45-residue protein sequence, read N- to C-terminus: uncharacterized protein (45 aa).

The tract at residues 18–45 (RRGRIGVQPSPERRSEVVGPFPLARSLS) is disordered.

This is an uncharacterized protein from Homo sapiens (Human).